A 356-amino-acid polypeptide reads, in one-letter code: MTRLTLALDVMGGDFGPSVTVPAALQALNSNSQLTLLLVGNPDAITPLLAKADFEQRSRLQIIPAQSVIASDARPSQAIRASRGSSMRMALELVKEGRAQACVSAGNTGALMGLAKLLLKPLEGIERPALVTVLPHQQKGKTVVLDLGANVDCDSTMLVQFAIMGSVLAEEVVEIPNPRVALLNIGEEEVKGLDSIRDASAVLKTIPSINYIGYLEANELLTGKTDVLVCDGFTGNVTLKTMEGVVRMFLSLLKSQGEGKKRSWWLLLLKRWLQKSLTRRFSHLNPDQYNGACLLGLRGTVIKSHGAANQRAFAVAIEQAVQAVQRQVPQRIAARLESVYPAGFELLDGGKSGTLR.

The protein belongs to the PlsX family. In terms of assembly, homodimer. Probably interacts with PlsY.

It is found in the cytoplasm. The catalysed reaction is a fatty acyl-[ACP] + phosphate = an acyl phosphate + holo-[ACP]. It functions in the pathway lipid metabolism; phospholipid metabolism. Catalyzes the reversible formation of acyl-phosphate (acyl-PO(4)) from acyl-[acyl-carrier-protein] (acyl-ACP). This enzyme utilizes acyl-ACP as fatty acyl donor, but not acyl-CoA. The polypeptide is Phosphate acyltransferase (Shigella flexneri serotype 5b (strain 8401)).